A 313-amino-acid chain; its full sequence is Porphobilinogen deaminase (313 aa).

Cys-242 is modified (S-(dipyrrolylmethanemethyl)cysteine).

It belongs to the HMBS family. In terms of assembly, monomer. The cofactor is dipyrromethane.

The enzyme catalyses 4 porphobilinogen + H2O = hydroxymethylbilane + 4 NH4(+). It participates in porphyrin-containing compound metabolism; protoporphyrin-IX biosynthesis; coproporphyrinogen-III from 5-aminolevulinate: step 2/4. Functionally, tetrapolymerization of the monopyrrole PBG into the hydroxymethylbilane pre-uroporphyrinogen in several discrete steps. In Pseudomonas fluorescens (strain Pf0-1), this protein is Porphobilinogen deaminase.